Consider the following 202-residue polypeptide: Protein-methionine-sulfoxide reductase heme-binding subunit MsrQ (202 aa).

Transmembrane regions (helical) follow at residues 8-28 (LAVF…AWIF), 42-62 (LGLG…LQKL), 75-95 (LGLW…VFIL), 110-130 (PYII…ITSN), 147-167 (LVYL…RADL), and 169-189 (EWTL…PSIA).

Belongs to the MsrQ family. In terms of assembly, heterodimer of a catalytic subunit (MsrP) and a heme-binding subunit (MsrQ). FMN is required as a cofactor. Heme b serves as cofactor.

Its subcellular location is the cell inner membrane. Functionally, part of the MsrPQ system that repairs oxidized periplasmic proteins containing methionine sulfoxide residues (Met-O), using respiratory chain electrons. Thus protects these proteins from oxidative-stress damage caused by reactive species of oxygen and chlorine generated by the host defense mechanisms. MsrPQ is essential for the maintenance of envelope integrity under bleach stress, rescuing a wide series of structurally unrelated periplasmic proteins from methionine oxidation. MsrQ provides electrons for reduction to the reductase catalytic subunit MsrP, using the quinone pool of the respiratory chain. In Pseudomonas paraeruginosa (strain DSM 24068 / PA7) (Pseudomonas aeruginosa (strain PA7)), this protein is Protein-methionine-sulfoxide reductase heme-binding subunit MsrQ.